We begin with the raw amino-acid sequence, 461 residues long: Zinc finger protein ZFP2 (461 aa).

13 C2H2-type zinc fingers span residues 102–124, 130–152, 158–180, 186–208, 214–236, 242–264, 270–292, 298–320, 326–348, 354–376, 382–404, 410–432, and 438–460; these read YECN…QRIH, YKCN…QRIH, YKCN…QRTH, YQCK…ERIH, YECN…QRSH, YECS…QRNH, YKCN…QRLH, FECN…RRIH, YECM…QVIH, YECD…QRTH, and YQCN…QRTH.

This sequence belongs to the krueppel C2H2-type zinc-finger protein family.

It is found in the nucleus. In terms of biological role, probable transcription factor involved in neuronal differentiation and/or phenotypic maintenance. The sequence is that of Zinc finger protein ZFP2 (ZFP2) from Homo sapiens (Human).